Consider the following 457-residue polypeptide: Amidophosphoribosyltransferase (457 aa).

Residue Cys2 is the Nucleophile of the active site. The Glutamine amidotransferase type-2 domain occupies 2–223; that stretch reads CGVVGIYHPD…PGKAAIIKDG (222 aa). Cys239 is a [4Fe-4S] cluster binding site. Mg(2+) is bound by residues Ser286, Asp348, and Asp349. [4Fe-4S] cluster-binding residues include Cys385, Cys438, and Cys441.

It in the C-terminal section; belongs to the purine/pyrimidine phosphoribosyltransferase family. Requires Mg(2+) as cofactor. [4Fe-4S] cluster is required as a cofactor.

It carries out the reaction 5-phospho-beta-D-ribosylamine + L-glutamate + diphosphate = 5-phospho-alpha-D-ribose 1-diphosphate + L-glutamine + H2O. Its pathway is purine metabolism; IMP biosynthesis via de novo pathway; N(1)-(5-phospho-D-ribosyl)glycinamide from 5-phospho-alpha-D-ribose 1-diphosphate: step 1/2. Functionally, catalyzes the formation of phosphoribosylamine from phosphoribosylpyrophosphate (PRPP) and glutamine. This chain is Amidophosphoribosyltransferase, found in Archaeoglobus fulgidus (strain ATCC 49558 / DSM 4304 / JCM 9628 / NBRC 100126 / VC-16).